The sequence spans 118 residues: NADPH-dependent 7-cyano-7-deazaguanine reductase (118 aa).

C34 acts as the Thioimide intermediate in catalysis. The Proton donor role is filled by D41. Substrate contacts are provided by residues 56 to 58 (VEL) and 75 to 76 (HE).

The protein belongs to the GTP cyclohydrolase I family. QueF type 1 subfamily.

Its subcellular location is the cytoplasm. The enzyme catalyses 7-aminomethyl-7-carbaguanine + 2 NADP(+) = 7-cyano-7-deazaguanine + 2 NADPH + 3 H(+). Its pathway is tRNA modification; tRNA-queuosine biosynthesis. Catalyzes the NADPH-dependent reduction of 7-cyano-7-deazaguanine (preQ0) to 7-aminomethyl-7-deazaguanine (preQ1). This is NADPH-dependent 7-cyano-7-deazaguanine reductase from Halorhodospira halophila (strain DSM 244 / SL1) (Ectothiorhodospira halophila (strain DSM 244 / SL1)).